The following is a 375-amino-acid chain: MKFELDTTDGRARRGRLVFDRGVVETPAFMPVGTYGTVKGMTPEEVEATGAQIILGNTFHLWLRPGQEIMKLHGDLHDFMQWKGPILTDSGGFQVFSLGDIRKITEQGVHFRNPINGDPIFLDPEKSMEIQYDLGSDIVMIFDECTPYPADWDYAKRSMEMSLRWAKRSRDRFDSLGNKNALFGIIQGSVYEDLRDISVKGLVEIGFDGYAVGGLAVGEPKADMHRILEHVCPQIPADKPRYLMGVGKPEDLVEGVRRGIDMFDCVMPTRNARNGHLFVTDGVVKIRNAKHKSDISPLDAECDCYTCRNYSRAYLHHLDRCNEILGARLNTIHNLRYYQRLMAGLRKAIEEGKLESFVTEFYQRQGRPVPPLNVD.

Catalysis depends on aspartate 89, which acts as the Proton acceptor. Substrate-binding positions include 89-93, aspartate 143, glutamine 187, and glycine 214; that span reads DSGGF. Residues 245–251 form an RNA binding region; sequence GVGKPED. The active-site Nucleophile is aspartate 264. An RNA binding; important for wobble base 34 recognition region spans residues 269–273; that stretch reads TRNAR. Positions 302, 304, 307, and 333 each coordinate Zn(2+).

This sequence belongs to the queuine tRNA-ribosyltransferase family. In terms of assembly, homodimer. Within each dimer, one monomer is responsible for RNA recognition and catalysis, while the other monomer binds to the replacement base PreQ1. Zn(2+) serves as cofactor.

It catalyses the reaction 7-aminomethyl-7-carbaguanine + guanosine(34) in tRNA = 7-aminomethyl-7-carbaguanosine(34) in tRNA + guanine. It participates in tRNA modification; tRNA-queuosine biosynthesis. Catalyzes the base-exchange of a guanine (G) residue with the queuine precursor 7-aminomethyl-7-deazaguanine (PreQ1) at position 34 (anticodon wobble position) in tRNAs with GU(N) anticodons (tRNA-Asp, -Asn, -His and -Tyr). Catalysis occurs through a double-displacement mechanism. The nucleophile active site attacks the C1' of nucleotide 34 to detach the guanine base from the RNA, forming a covalent enzyme-RNA intermediate. The proton acceptor active site deprotonates the incoming PreQ1, allowing a nucleophilic attack on the C1' of the ribose to form the product. After dissociation, two additional enzymatic reactions on the tRNA convert PreQ1 to queuine (Q), resulting in the hypermodified nucleoside queuosine (7-(((4,5-cis-dihydroxy-2-cyclopenten-1-yl)amino)methyl)-7-deazaguanosine). The protein is Queuine tRNA-ribosyltransferase of Salmonella typhi.